The primary structure comprises 255 residues: MSIDWITVAAQIVNFLLLIWLLKRFLYRPILDGIDAREAEIAARMGEAAAVRQQAEARETEYEARIAQLSSSRAELLEEARRAAEAERDALLSKARARLEEEQAERAAHRAEEAARHRADLQRRGAEALLALTRKALRDLADEGLERRIVLQAAGRLADMGDDLREAAGDARQAVALTRDPLPEEVQARLRSDLGDVLEGVSLRFEVDPGQSPGLNLRLGGAQLGWTVDSYLNGLEATLAEAAGRPARRGGHDAA.

The chain crosses the membrane as a helical span at residues 5–22; the sequence is WITVAAQIVNFLLLIWLL.

It belongs to the ATPase B chain family. As to quaternary structure, F-type ATPases have 2 components, F(1) - the catalytic core - and F(0) - the membrane proton channel. F(1) has five subunits: alpha(3), beta(3), gamma(1), delta(1), epsilon(1). F(0) has three main subunits: a(1), b(2) and c(10-14). The alpha and beta chains form an alternating ring which encloses part of the gamma chain. F(1) is attached to F(0) by a central stalk formed by the gamma and epsilon chains, while a peripheral stalk is formed by the delta and b chains.

Its subcellular location is the cell inner membrane. In terms of biological role, f(1)F(0) ATP synthase produces ATP from ADP in the presence of a proton or sodium gradient. F-type ATPases consist of two structural domains, F(1) containing the extramembraneous catalytic core and F(0) containing the membrane proton channel, linked together by a central stalk and a peripheral stalk. During catalysis, ATP synthesis in the catalytic domain of F(1) is coupled via a rotary mechanism of the central stalk subunits to proton translocation. Functionally, component of the F(0) channel, it forms part of the peripheral stalk, linking F(1) to F(0). This Dinoroseobacter shibae (strain DSM 16493 / NCIMB 14021 / DFL 12) protein is ATP synthase subunit b 1.